Reading from the N-terminus, the 130-residue chain is Small ribosomal subunit protein uS9 (130 aa).

This sequence belongs to the universal ribosomal protein uS9 family.

This chain is Small ribosomal subunit protein uS9, found in Buchnera aphidicola subsp. Acyrthosiphon pisum (strain Tuc7).